Reading from the N-terminus, the 458-residue chain is Bifunctional protein GlmU (458 aa).

Residues 1–229 (MNKFAIVLAA…FDESLGVNDR (229 aa)) are pyrophosphorylase. Residues 8–11 (LAAG), Lys-22, Gln-72, and 77–78 (GT) each bind UDP-N-acetyl-alpha-D-glucosamine. Position 102 (Asp-102) interacts with Mg(2+). Residues Gly-139, Glu-154, Asn-169, and Asn-227 each coordinate UDP-N-acetyl-alpha-D-glucosamine. Asn-227 contacts Mg(2+). The tract at residues 230 to 250 (VALSQAEGTMRKRINHEHMVN) is linker. Residues 251–458 (GVTLIDPATT…AKKMPHYRGQ (208 aa)) are N-acetyltransferase. UDP-N-acetyl-alpha-D-glucosamine-binding residues include Arg-332 and Lys-350. His-362 (proton acceptor) is an active-site residue. Tyr-365 and Asn-376 together coordinate UDP-N-acetyl-alpha-D-glucosamine. Acetyl-CoA-binding residues include Ala-379, Ser-404, Ala-422, and Arg-439.

It in the N-terminal section; belongs to the N-acetylglucosamine-1-phosphate uridyltransferase family. This sequence in the C-terminal section; belongs to the transferase hexapeptide repeat family. As to quaternary structure, homotrimer. Requires Mg(2+) as cofactor.

It is found in the cytoplasm. The enzyme catalyses alpha-D-glucosamine 1-phosphate + acetyl-CoA = N-acetyl-alpha-D-glucosamine 1-phosphate + CoA + H(+). The catalysed reaction is N-acetyl-alpha-D-glucosamine 1-phosphate + UTP + H(+) = UDP-N-acetyl-alpha-D-glucosamine + diphosphate. It participates in nucleotide-sugar biosynthesis; UDP-N-acetyl-alpha-D-glucosamine biosynthesis; N-acetyl-alpha-D-glucosamine 1-phosphate from alpha-D-glucosamine 6-phosphate (route II): step 2/2. It functions in the pathway nucleotide-sugar biosynthesis; UDP-N-acetyl-alpha-D-glucosamine biosynthesis; UDP-N-acetyl-alpha-D-glucosamine from N-acetyl-alpha-D-glucosamine 1-phosphate: step 1/1. The protein operates within bacterial outer membrane biogenesis; LPS lipid A biosynthesis. Functionally, catalyzes the last two sequential reactions in the de novo biosynthetic pathway for UDP-N-acetylglucosamine (UDP-GlcNAc). The C-terminal domain catalyzes the transfer of acetyl group from acetyl coenzyme A to glucosamine-1-phosphate (GlcN-1-P) to produce N-acetylglucosamine-1-phosphate (GlcNAc-1-P), which is converted into UDP-GlcNAc by the transfer of uridine 5-monophosphate (from uridine 5-triphosphate), a reaction catalyzed by the N-terminal domain. This chain is Bifunctional protein GlmU, found in Lactococcus lactis subsp. cremoris (strain SK11).